Here is a 51-residue protein sequence, read N- to C-terminus: Glutamine synthetase (51 aa).

This sequence belongs to the glutamine synthetase family. As to quaternary structure, homooctamer.

It is found in the cytoplasm. It carries out the reaction L-glutamate + NH4(+) + ATP = L-glutamine + ADP + phosphate + H(+). In Vitis sp. (Grape), this protein is Glutamine synthetase.